The sequence spans 368 residues: Probable staphylococcal-like nuclease CAN2 (368 aa).

A lipid anchor (N-myristoyl glycine) is attached at Gly2. A lipid anchor (S-palmitoyl cysteine) is attached at Cys7. The segment at Asp16 to Thr56 is disordered. The segment covering Pro27–Pro38 has biased composition (low complexity). Residues Asn168 to Ser344 enclose the TNase-like domain. Residue Asp181 participates in Ca(2+) binding. Residue Arg251 is part of the active site. Asp256 is a binding site for Ca(2+). Catalysis depends on residues Glu259 and Arg293.

The protein belongs to the thermonuclease family. It depends on Ca(2+) as a cofactor.

It localises to the cell membrane. In terms of biological role, enzyme that catalyzes the hydrolysis of both DNA and RNA at the 5' position of the phosphodiester bond. The sequence is that of Probable staphylococcal-like nuclease CAN2 from Oryza sativa subsp. japonica (Rice).